Consider the following 560-residue polypeptide: Leiomodin-3 (560 aa).

The interaction with tropomyosin alpha stretch occupies residues 1–49; that stretch reads MSEHSRNSDQEELLDEEINEDEILANLSAEELKELQSEMEVMAPDPSLP. Residues 16-42 adopt a coiled-coil conformation; sequence EEINEDEILANLSAEELKELQSEMEVM. 2 disordered regions span residues 45–68 and 127–217; these read DPSL…NFNH and IVAN…SKLD. Residues 142-167 show a composition bias toward acidic residues; sequence ETDEEDEEEEDDDDDDEGEDDGEESE. Over residues 168-182 the composition is skewed to basic and acidic residues; sequence ETNREEEGKAKEQIR. Polar residues predominate over residues 183 to 192; the sequence is NCENNCQQVT. Over residues 194-217 the composition is skewed to basic and acidic residues; sequence KAFKEQRDRPEAQEQSEKKISKLD. Residues 386–425 adopt a coiled-coil conformation; it reads VTNLLTRNQDKQRQKRQEEQKQQQLKEQKKLIAMLENGLG. Disordered regions lie at residues 437-480 and 494-530; these read PKPD…KYRT and QRKS…PPLV. Over residues 448–458 the composition is skewed to pro residues; sequence QPPPPRPPNPQ. A compositionally biased stretch (basic and acidic residues) spans 498–516; that stretch reads RMPEAREPPEKTNLKDVIK. In terms of domain architecture, WH2 spans 534–553; it reads PRDQLLNDIRHSSVAYLKPV.

The protein belongs to the tropomodulin family. As to quaternary structure, may interact with tropomyosin alpha (TPM1/2) N-terminus. Interacts with KLHL40; leading to stabilization. Post-translationally, ubiquitinated, leading to its degradation. Interaction with KLHL40 negatively regulates ubiquitination and degradation. In terms of tissue distribution, expressed in cardiac and at higher levels in skeletal muscles (at protein level).

It localises to the cytoplasm. Its subcellular location is the myofibril. The protein localises to the sarcomere. The protein resides in the m line. It is found in the a band. It localises to the cytoskeleton. Functionally, essential for the organization of sarcomeric actin thin filaments in skeletal muscle. Increases the rate of actin polymerization. The sequence is that of Leiomodin-3 (LMOD3) from Homo sapiens (Human).